A 207-amino-acid chain; its full sequence is NADH-ubiquinone oxidoreductase chain 6 (207 aa).

The next 5 membrane-spanning stretches (helical) occupy residues 1-21 (MDFLFYIFSSLTLISGSLVIQ), 28-48 (SVLFLVLVFFNAAGLLVLLGL), 50-70 (FFALIFLVVYVGAIAVLFLFV), 88-108 (YLPVGGVLGVLFLFEICILID), and 158-178 (FYFFLVASLILLVAMIGAIVL).

It belongs to the complex I subunit 6 family.

It localises to the mitochondrion membrane. It catalyses the reaction a ubiquinone + NADH + 5 H(+)(in) = a ubiquinol + NAD(+) + 4 H(+)(out). Its function is as follows. Core subunit of the mitochondrial membrane respiratory chain NADH dehydrogenase (Complex I) that is believed to belong to the minimal assembly required for catalysis. Complex I functions in the transfer of electrons from NADH to the respiratory chain. The immediate electron acceptor for the enzyme is believed to be ubiquinone. The protein is NADH-ubiquinone oxidoreductase chain 6 (ND6) of Prototheca wickerhamii.